Consider the following 140-residue polypeptide: Callisulfakinin (140 aa).

The first 30 residues, 1–30 (MYSQQRIFNSKYFIFFIAVLSIFWLPTMSA), serve as a signal peptide directing secretion. The propeptide occupies 31-109 (RNLENSKNEN…LEYEDEDRSK (79 aa)). The residue at position 114 (Tyr114) is a Sulfotyrosine. Phe119 carries the phenylalanine amide modification. Tyr131 carries the post-translational modification Sulfotyrosine. At Phe136 the chain carries Phenylalanine amide. Positions 139–140 (SI) are excised as a propeptide.

It belongs to the gastrin/cholecystokinin family. In terms of tissue distribution, in brain, it is specifically expressed in four pairs of neurons. Not expressed in other cells of the brain and in the thoracico-abdominal ganglion.

The protein localises to the secreted. Functionally, callisulfakinin I is a neuropeptide. The existence of Callisulfakinin II is uncertain. The protein is Callisulfakinin of Calliphora vomitoria (Blue bottle fly).